Consider the following 31-residue polypeptide: Large ribosomal subunit protein bL21 (31 aa).

This sequence belongs to the bacterial ribosomal protein bL21 family. In terms of assembly, part of the 50S ribosomal subunit. Contacts protein L20.

Its function is as follows. This protein binds to 23S rRNA in the presence of protein L20. This is Large ribosomal subunit protein bL21 (rplU) from Streptococcus thermophilus.